The chain runs to 1027 residues: Transient-receptor-potential-like protein (1027 aa).

The interval 1–22 (MTKEGMLSAAGRRFSRCAPSPR) is disordered. ANK repeat units lie at residues 85-115 (MGRT…RIGN), 117-141 (LLCA…ITRE), and 163-192 (SDIS…SIEK). 6 consecutive transmembrane segments (helical) span residues 355 to 375 (FFLY…YILM), 391 to 411 (FFYY…ATFE), 473 to 493 (FLMI…YYIF), 516 to 536 (VAEA…IYLF), 559 to 579 (FCFI…QLYW), and 640 to 660 (MFIM…IAMM). Disordered regions lie at residues 825-929 (KRDI…TYTS) and 1008-1027 (ENVK…NVEK). Positions 855 to 874 (EESEEDDKSDETSSTDEEAD) are enriched in acidic residues. The span at 910–923 (RASEADSKLPDRPL) shows a compositional bias: basic and acidic residues. Residues 1008 to 1017 (ENVKSPSPAS) show a composition bias toward polar residues.

The protein belongs to the transient receptor (TC 1.A.4) family. STrpC subfamily.

The protein resides in the membrane. In terms of biological role, could mediate calcium entry and form a calcium permeant channel. This Caenorhabditis elegans protein is Transient-receptor-potential-like protein (trp-1).